The following is a 129-amino-acid chain: Fluoride-specific ion channel FluC 2 (129 aa).

A helical transmembrane segment spans residues 19-39; it reads GLGLVVPAAAVGGFPLGTLFI. Glycine 74 and threonine 77 together coordinate Na(+). Residues 95 to 115 form a helical membrane-spanning segment; that stretch reads FGMAAVYIAASLFGGLLASWA.

It belongs to the fluoride channel Fluc/FEX (TC 1.A.43) family.

It localises to the cell membrane. The enzyme catalyses fluoride(in) = fluoride(out). Na(+) is not transported, but it plays an essential structural role and its presence is essential for fluoride channel function. Functionally, fluoride-specific ion channel. Important for reducing fluoride concentration in the cell, thus reducing its toxicity. This is Fluoride-specific ion channel FluC 2 from Geobacillus kaustophilus (strain HTA426).